A 1116-amino-acid polypeptide reads, in one-letter code: Error-prone DNA polymerase (1116 aa).

It belongs to the DNA polymerase type-C family. DnaE2 subfamily.

The protein resides in the cytoplasm. It catalyses the reaction DNA(n) + a 2'-deoxyribonucleoside 5'-triphosphate = DNA(n+1) + diphosphate. In terms of biological role, DNA polymerase involved in damage-induced mutagenesis and translesion synthesis (TLS). It is not the major replicative DNA polymerase. The protein is Error-prone DNA polymerase of Sinorhizobium medicae (strain WSM419) (Ensifer medicae).